Reading from the N-terminus, the 119-residue chain is Large ribosomal subunit protein bL20 (119 aa).

It belongs to the bacterial ribosomal protein bL20 family.

Its function is as follows. Binds directly to 23S ribosomal RNA and is necessary for the in vitro assembly process of the 50S ribosomal subunit. It is not involved in the protein synthesizing functions of that subunit. This Latilactobacillus sakei subsp. sakei (strain 23K) (Lactobacillus sakei subsp. sakei) protein is Large ribosomal subunit protein bL20.